The following is a 320-amino-acid chain: o-succinylbenzoate synthase (320 aa).

Residue Lys133 is the Proton donor of the active site. 3 residues coordinate Mg(2+): Asp161, Glu190, and Asp213. Lys235 (proton acceptor) is an active-site residue.

It belongs to the mandelate racemase/muconate lactonizing enzyme family. MenC type 1 subfamily. Requires a divalent metal cation as cofactor.

The catalysed reaction is (1R,6R)-6-hydroxy-2-succinyl-cyclohexa-2,4-diene-1-carboxylate = 2-succinylbenzoate + H2O. It participates in quinol/quinone metabolism; 1,4-dihydroxy-2-naphthoate biosynthesis; 1,4-dihydroxy-2-naphthoate from chorismate: step 4/7. The protein operates within quinol/quinone metabolism; menaquinone biosynthesis. Its function is as follows. Converts 2-succinyl-6-hydroxy-2,4-cyclohexadiene-1-carboxylate (SHCHC) to 2-succinylbenzoate (OSB). The polypeptide is o-succinylbenzoate synthase (Escherichia coli O7:K1 (strain IAI39 / ExPEC)).